Reading from the N-terminus, the 417-residue chain is Lipoyl synthase, mitochondrial (417 aa).

Positions 35-56 (EANPTDLAGLKRKAKRRPTKLA) are disordered. The span at 44 to 53 (LKRKAKRRPT) shows a compositional bias: basic residues. Residues Cys122, Cys127, Cys133, Cys152, Cys156, Cys159, and Ser367 each coordinate [4Fe-4S] cluster. The region spanning 137 to 356 (KKSEATATIM…RDKALEMGFL (220 aa)) is the Radical SAM core domain. The interval 389 to 417 (IEEQQHDKENNNLLLSKEDEKTTQEKANF) is disordered. Residues 391-417 (EQQHDKENNNLLLSKEDEKTTQEKANF) are compositionally biased toward basic and acidic residues.

Belongs to the radical SAM superfamily. Lipoyl synthase family. The cofactor is [4Fe-4S] cluster.

It localises to the mitochondrion. It catalyses the reaction [[Fe-S] cluster scaffold protein carrying a second [4Fe-4S](2+) cluster] + N(6)-octanoyl-L-lysyl-[protein] + 2 oxidized [2Fe-2S]-[ferredoxin] + 2 S-adenosyl-L-methionine + 4 H(+) = [[Fe-S] cluster scaffold protein] + N(6)-[(R)-dihydrolipoyl]-L-lysyl-[protein] + 4 Fe(3+) + 2 hydrogen sulfide + 2 5'-deoxyadenosine + 2 L-methionine + 2 reduced [2Fe-2S]-[ferredoxin]. It participates in protein modification; protein lipoylation via endogenous pathway; protein N(6)-(lipoyl)lysine from octanoyl-[acyl-carrier-protein]: step 2/2. Its function is as follows. Catalyzes the radical-mediated insertion of two sulfur atoms into the C-6 and C-8 positions of the octanoyl moiety bound to the lipoyl domains of lipoate-dependent enzymes, thereby converting the octanoylated domains into lipoylated derivatives. The chain is Lipoyl synthase, mitochondrial from Komagataella phaffii (strain GS115 / ATCC 20864) (Yeast).